A 294-amino-acid polypeptide reads, in one-letter code: Cytidine deaminase (294 aa).

2 CMP/dCMP-type deaminase domains span residues 48-168 and 186-294; these read DDDA…FGPR and LKGD…VTLA. Position 89–91 (89–91) interacts with substrate; sequence NME. H102 lines the Zn(2+) pocket. Residue E104 is the Proton donor of the active site. Zn(2+)-binding residues include C129 and C132.

This sequence belongs to the cytidine and deoxycytidylate deaminase family. As to quaternary structure, homodimer. Zn(2+) is required as a cofactor.

It catalyses the reaction cytidine + H2O + H(+) = uridine + NH4(+). The enzyme catalyses 2'-deoxycytidine + H2O + H(+) = 2'-deoxyuridine + NH4(+). In terms of biological role, this enzyme scavenges exogenous and endogenous cytidine and 2'-deoxycytidine for UMP synthesis. The protein is Cytidine deaminase of Cronobacter sakazakii (strain ATCC BAA-894) (Enterobacter sakazakii).